The following is a 347-amino-acid chain: Histidinol-phosphate aminotransferase (347 aa).

Residue K209 is modified to N6-(pyridoxal phosphate)lysine.

The protein belongs to the class-II pyridoxal-phosphate-dependent aminotransferase family. Histidinol-phosphate aminotransferase subfamily. As to quaternary structure, homodimer. Requires pyridoxal 5'-phosphate as cofactor.

It carries out the reaction L-histidinol phosphate + 2-oxoglutarate = 3-(imidazol-4-yl)-2-oxopropyl phosphate + L-glutamate. The protein operates within amino-acid biosynthesis; L-histidine biosynthesis; L-histidine from 5-phospho-alpha-D-ribose 1-diphosphate: step 7/9. This is Histidinol-phosphate aminotransferase from Syntrophotalea carbinolica (strain DSM 2380 / NBRC 103641 / GraBd1) (Pelobacter carbinolicus).